Consider the following 419-residue polypeptide: Metacaspase-1 (419 aa).

The disordered stretch occupies residues 1 to 109 (MSGYPGYNNG…PPQGMHAFGQ (109 aa)). Composition is skewed to pro residues over residues 18–37 (QYPP…PPPQ) and 45–61 (QPPP…PPPQ). Polar residues predominate over residues 83–95 (SVNSNAYTNGNQN). Catalysis depends on residues histidine 210 and cysteine 266.

This sequence belongs to the peptidase C14B family.

Involved in cell death (apoptosis). This chain is Metacaspase-1 (casA), found in Botryotinia fuckeliana (strain B05.10) (Noble rot fungus).